Consider the following 74-residue polypeptide: Large ribosomal subunit protein uL29 (74 aa).

This sequence belongs to the universal ribosomal protein uL29 family.

In Streptomyces avermitilis (strain ATCC 31267 / DSM 46492 / JCM 5070 / NBRC 14893 / NCIMB 12804 / NRRL 8165 / MA-4680), this protein is Large ribosomal subunit protein uL29.